The chain runs to 161 residues: Vitamin K-dependent protein C (161 aa).

One can recognise a Peptidase S1 domain in the interval 1-161 (EKWELDLDIE…GCGLLHNYGV (161 aa)). Residue Asn-17 is glycosylated (N-linked (GlcNAc...) asparagine). The active-site Charge relay system is the Asp-26. N-linked (GlcNAc...) asparagine glycosylation is present at Asn-82. Disulfide bonds link Cys-100–Cys-114 and Cys-125–Cys-153. Ser-129 (charge relay system) is an active-site residue.

The protein belongs to the peptidase S1 family. In terms of tissue distribution, plasma; synthesized in the liver.

The protein resides in the secreted. It is found in the golgi apparatus. The protein localises to the endoplasmic reticulum. It catalyses the reaction Degradation of blood coagulation factors Va and VIIIa.. Its function is as follows. Protein C is a vitamin K-dependent serine protease that regulates blood coagulation by inactivating factors Va and VIIIa in the presence of calcium ions and phospholipids. Exerts a protective effect on the endothelial cell barrier function. The protein is Vitamin K-dependent protein C (PROC) of Macaca mulatta (Rhesus macaque).